Reading from the N-terminus, the 216-residue chain is Protein-L-isoaspartate O-methyltransferase (216 aa).

The active site involves S63.

This sequence belongs to the methyltransferase superfamily. L-isoaspartyl/D-aspartyl protein methyltransferase family.

It is found in the cytoplasm. The enzyme catalyses [protein]-L-isoaspartate + S-adenosyl-L-methionine = [protein]-L-isoaspartate alpha-methyl ester + S-adenosyl-L-homocysteine. In terms of biological role, catalyzes the methyl esterification of L-isoaspartyl residues in peptides and proteins that result from spontaneous decomposition of normal L-aspartyl and L-asparaginyl residues. It plays a role in the repair and/or degradation of damaged proteins. This chain is Protein-L-isoaspartate O-methyltransferase, found in Rhodopseudomonas palustris (strain BisB18).